Here is a 164-residue protein sequence, read N- to C-terminus: Large ribosomal subunit protein uL10 (164 aa).

Belongs to the universal ribosomal protein uL10 family. As to quaternary structure, part of the ribosomal stalk of the 50S ribosomal subunit. The N-terminus interacts with L11 and the large rRNA to form the base of the stalk. The C-terminus forms an elongated spine to which L12 dimers bind in a sequential fashion forming a multimeric L10(L12)X complex.

Its function is as follows. Forms part of the ribosomal stalk, playing a central role in the interaction of the ribosome with GTP-bound translation factors. The protein is Large ribosomal subunit protein uL10 of Helicobacter pylori (strain HPAG1).